Consider the following 400-residue polypeptide: MEPGLLRPAPVSEVIVLHYNYTGKLRGARYQPGAGLRADAAVCLAVCAFIVLENLAVLLVLVRHPRFHAPMFLLLGSLTLSDLLAGAAYATNILLSGPLTLRLSPALWFAREGGVFVALAASVLSLLAIALERHLTMARRGPAPAASRARTLAMAVAAWGASLLLGLLPALGWNCLGRLETCSTVLPLYAKAYVLFCVLAFLGILAAICALYARIYCQVRANARRLRAGPGSRRATSSSRSRHTPRSLALLRTLSVVLLAFVACWGPLFLLLLLDVACPARACPVLLQADPFLGLAMANSLLNPIIYTFTNRDLRHALLRLLCCGRGPCNQDSSNSLQRSPSAAGPSGGGLRRCLPPTLDRSSSPSEHLSPQQDGVDTSCSTGSPGVATANRSLVPTATD.

Over 1-41 (MEPGLLRPAPVSEVIVLHYNYTGKLRGARYQPGAGLRADAA) the chain is Extracellular. Asn20 is a glycosylation site (N-linked (GlcNAc...) asparagine). The chain crosses the membrane as a helical span at residues 42 to 62 (VCLAVCAFIVLENLAVLLVLV). Residues 63–68 (RHPRFH) lie on the Cytoplasmic side of the membrane. Residues 69-89 (APMFLLLGSLTLSDLLAGAAY) form a helical membrane-spanning segment. Topologically, residues 90–111 (ATNILLSGPLTLRLSPALWFAR) are extracellular. A helical transmembrane segment spans residues 112–132 (EGGVFVALAASVLSLLAIALE). Residues 133–151 (RHLTMARRGPAPAASRART) are Cytoplasmic-facing. A helical transmembrane segment spans residues 152-172 (LAMAVAAWGASLLLGLLPALG). At 173–192 (WNCLGRLETCSTVLPLYAKA) the chain is on the extracellular side. The chain crosses the membrane as a helical span at residues 193-213 (YVLFCVLAFLGILAAICALYA). Topologically, residues 214 to 253 (RIYCQVRANARRLRAGPGSRRATSSSRSRHTPRSLALLRT) are cytoplasmic. The helical transmembrane segment at 254 to 274 (LSVVLLAFVACWGPLFLLLLL) threads the bilayer. Residues 275-288 (DVACPARACPVLLQ) are Extracellular-facing. A helical membrane pass occupies residues 289–309 (ADPFLGLAMANSLLNPIIYTF). Residues 310-400 (TNRDLRHALL…NRSLVPTATD (91 aa)) lie on the Cytoplasmic side of the membrane. A lipid anchor (S-palmitoyl cysteine) is attached at Cys324. A disordered region spans residues 331 to 400 (QDSSNSLQRS…NRSLVPTATD (70 aa)). Residues Ser340, Ser342, and Ser384 each carry the phosphoserine modification. A compositionally biased stretch (polar residues) spans 360–400 (DRSSSPSEHLSPQQDGVDTSCSTGSPGVATANRSLVPTATD).

This sequence belongs to the G-protein coupled receptor 1 family. In terms of tissue distribution, expressed in spleen and brain. In the CNS expression is restricted to oligodendrocytes.

The protein resides in the cell membrane. In terms of biological role, receptor for the lysosphingolipid sphingosine 1-phosphate (S1P). S1P is a bioactive lysophospholipid that elicits diverse physiological effect on most types of cells and tissues. Is coupled to both the G(i/0)alpha and G(12) subclass of heteromeric G-proteins. S1P activation on oligodendroglial cells modulates two distinct functional pathways mediating either process retraction or cell survival. S1P activation on O4-positive pre-oligodendrocytes induces process retraction via a Rho kinase/collapsin response-mediated protein signaling pathway. The S1P-induced survival of mature oligodendrocytes is mediated through a pertussis toxin-sensitive, Akt-dependent pathway. S1P activation on oligodendroglial cells modulates two distinct functional pathways mediating either process retraction or cell survival. These effects depend on the developmental stage of the cell. This is Sphingosine 1-phosphate receptor 5 (S1pr5) from Mus musculus (Mouse).